The sequence spans 211 residues: Uracil phosphoribosyltransferase (211 aa).

5-phospho-alpha-D-ribose 1-diphosphate contacts are provided by residues R79, R104, and D131 to S139. Uracil-binding positions include I196 and G201–A203. D202 lines the 5-phospho-alpha-D-ribose 1-diphosphate pocket.

It belongs to the UPRTase family. Mg(2+) serves as cofactor.

The enzyme catalyses UMP + diphosphate = 5-phospho-alpha-D-ribose 1-diphosphate + uracil. The protein operates within pyrimidine metabolism; UMP biosynthesis via salvage pathway; UMP from uracil: step 1/1. Its activity is regulated as follows. Allosterically activated by GTP. In terms of biological role, catalyzes the conversion of uracil and 5-phospho-alpha-D-ribose 1-diphosphate (PRPP) to UMP and diphosphate. In Lactococcus lactis subsp. cremoris (strain MG1363), this protein is Uracil phosphoribosyltransferase.